Reading from the N-terminus, the 1019-residue chain is Photoactivated adenylate cyclase subunit alpha-like protein FB (1019 aa).

In terms of domain architecture, BLUF 1 spans 55 to 148; it reads LRRLMYLSAS…GRLYGEWHMK (94 aa). The region spanning 204-332 is the Guanylate cyclase 1 domain; it reads VVTFIYLVEF…DCINTASRIT (129 aa). The BLUF 2 domain maps to 467–559; sequence LITLTYISQA…REYGSPLDMT (93 aa). Residues 615–744 form the Guanylate cyclase 2 domain; that stretch reads VLLATDICSF…EVSARVMEVV (130 aa). The span at 825–839 shows a compositional bias: low complexity; the sequence is APGRGAPAGGIPSSP. The interval 825-862 is disordered; the sequence is APGRGAPAGGIPSSPKVRPPGRTNSVSSYTPDPNEALD. Positions 846 to 855 are enriched in polar residues; it reads RTNSVSSYTP.

Belongs to the adenylyl cyclase class-4/guanylyl cyclase family. In terms of assembly, heterotetramer of two alpha and two beta subunits.

The protein localises to the cell projection. The protein resides in the cilium. It localises to the flagellum. This is Photoactivated adenylate cyclase subunit alpha-like protein FB from Euglena gracilis.